A 482-amino-acid polypeptide reads, in one-letter code: Serine carboxypeptidase-like 26 (482 aa).

A signal peptide spans 1–28 (MAVAAAAAARRRDVSCLLLLLCFSSSMA). 3 disulfides stabilise this stretch: Cys-101-Cys-366, Cys-263-Cys-274, and Cys-298-Cys-333. Asn-152 is a glycosylation site (N-linked (GlcNAc...) asparagine). Ser-194 is an active-site residue. N-linked (GlcNAc...) asparagine glycans are attached at residues Asn-269, Asn-301, Asn-354, and Asn-375. Active-site residues include Asp-403 and His-455.

Belongs to the peptidase S10 family.

It is found in the secreted. Its function is as follows. Acts as a positive regulator of grain size by controlling grain width, filling and weight. High expression of GS5 in the grain is correlated with large grain size. The sequence is that of Serine carboxypeptidase-like 26 from Oryza sativa subsp. japonica (Rice).